Here is a 1035-residue protein sequence, read N- to C-terminus: Cell-division control histidine kinase PdhS (1035 aa).

An important for polar localization region spans residues 1-613 (MSGSYPFIDI…HADGSEEPVD (613 aa)). Positions 500-533 (QGLANTRAESETPVSETSSIEPVEPTPPVKTRSE) are disordered. Residues 614-1035 (AHLNAIAWRG…VFPPTRVLAD (422 aa)) form an interaction with DivK region. Positions 659–730 (HVEELKTILD…YLHGLSGNGV (72 aa)) constitute a PAS domain. Residues 802–1031 (RISHEIRTPL…VVEIVFPPTR (230 aa)) enclose the Histidine kinase domain. Histidine 805 bears the Phosphohistidine; by autocatalysis mark.

Interacts with DivK.

It localises to the cytoplasm. The catalysed reaction is ATP + protein L-histidine = ADP + protein N-phospho-L-histidine.. Functionally, functions as a polar differentiation marker. Essential protein that, by localizing in the old pole of dividing cells, controls cell division and maturation, probably through control of DivK phosphorylation status and cellular distribution, which in turn regulates CtrA, a transcriptional regulator of the minB operon. The asymmetrical localization of this protein is probably required for cells to enter a new division cycle. The sequence is that of Cell-division control histidine kinase PdhS (pdhS) from Brucella melitensis biotype 1 (strain ATCC 23456 / CCUG 17765 / NCTC 10094 / 16M).